Consider the following 771-residue polypeptide: Protein translocase subunit SecA 2 (771 aa).

Residues Q91, 109–113 (GEGKT), and D496 contribute to the ATP site.

This sequence belongs to the SecA family. Monomer and homodimer. Part of the essential Sec protein translocation apparatus which comprises SecA, SecYEG and auxiliary proteins SecDF. Other proteins may also be involved.

It localises to the cell membrane. It is found in the cytoplasm. The enzyme catalyses ATP + H2O + cellular proteinSide 1 = ADP + phosphate + cellular proteinSide 2.. Its function is as follows. Part of the Sec protein translocase complex. Interacts with the SecYEG preprotein conducting channel. Has a central role in coupling the hydrolysis of ATP to the transfer of proteins into and across the cell membrane, serving as an ATP-driven molecular motor driving the stepwise translocation of polypeptide chains across the membrane. This chain is Protein translocase subunit SecA 2, found in Corynebacterium jeikeium (strain K411).